A 222-amino-acid chain; its full sequence is Histidine biosynthesis bifunctional protein HisIE (222 aa).

Residues 1 to 128 form a phosphoribosyl-AMP cyclohydrolase region; the sequence is MQPLSPAFID…SLTLPPPMDA (128 aa). Residues 129–222 form a phosphoribosyl-ATP pyrophosphohydrolase region; sequence CSELFRVIDQ…ANRRGAPRRN (94 aa).

In the N-terminal section; belongs to the PRA-CH family. It in the C-terminal section; belongs to the PRA-PH family.

The protein localises to the cytoplasm. The catalysed reaction is 1-(5-phospho-beta-D-ribosyl)-ATP + H2O = 1-(5-phospho-beta-D-ribosyl)-5'-AMP + diphosphate + H(+). The enzyme catalyses 1-(5-phospho-beta-D-ribosyl)-5'-AMP + H2O = 1-(5-phospho-beta-D-ribosyl)-5-[(5-phospho-beta-D-ribosylamino)methylideneamino]imidazole-4-carboxamide. The protein operates within amino-acid biosynthesis; L-histidine biosynthesis; L-histidine from 5-phospho-alpha-D-ribose 1-diphosphate: step 2/9. Its pathway is amino-acid biosynthesis; L-histidine biosynthesis; L-histidine from 5-phospho-alpha-D-ribose 1-diphosphate: step 3/9. The chain is Histidine biosynthesis bifunctional protein HisIE from Prochlorococcus marinus (strain MIT 9313).